Reading from the N-terminus, the 247-residue chain is Glucosamine-6-phosphate deaminase (247 aa).

Residue Asp-67 is the Proton acceptor; for enolization step of the active site. Residue Asn-136 is the For ring-opening step of the active site. His-138 serves as the catalytic Proton acceptor; for ring-opening step. The active-site For ring-opening step is Glu-143.

Belongs to the glucosamine/galactosamine-6-phosphate isomerase family. NagB subfamily.

The catalysed reaction is alpha-D-glucosamine 6-phosphate + H2O = beta-D-fructose 6-phosphate + NH4(+). The protein operates within amino-sugar metabolism; N-acetylneuraminate degradation; D-fructose 6-phosphate from N-acetylneuraminate: step 5/5. Its function is as follows. Catalyzes the reversible isomerization-deamination of glucosamine 6-phosphate (GlcN6P) to form fructose 6-phosphate (Fru6P) and ammonium ion. The protein is Glucosamine-6-phosphate deaminase of Shouchella clausii (strain KSM-K16) (Alkalihalobacillus clausii).